We begin with the raw amino-acid sequence, 512 residues long: Sucrose transport protein SUC5 (512 aa).

The segment at 1-27 (MGALEAERAANNATALETQSSPEDLGQ) is disordered. Over 1 to 33 (MGALEAERAANNATALETQSSPEDLGQPSPLRK) the chain is Cytoplasmic. The span at 11 to 22 (NNATALETQSSP) shows a compositional bias: polar residues. Phosphoserine is present on S20. A helical membrane pass occupies residues 34–54 (IISVASIAAGVQFGWALQLSL). Over 55-67 (LTPYIQLLGIPHK) the chain is Extracellular. Residues 68-88 (WSSYMWLCGPISGMIVQPIVG) traverse the membrane as a helical segment. At 89–102 (YHSDRCESRFGRRR) the chain is on the cytoplasmic side. A helical membrane pass occupies residues 103–123 (PFIAAGVALVAVSVFLIGFAA). Residues 124-140 (DMGHSFGDKLENKVRTR) lie on the Extracellular side of the membrane. A helical transmembrane segment spans residues 141–161 (AIIIFLTGFWFLDVANNTLQG). The Cytoplasmic segment spans residues 162–179 (PCRAFLADLAAGDAKKTR). Residues 180–200 (VANACFSFFMAVGNVLGYAAG) traverse the membrane as a helical segment. Topologically, residues 201–225 (SYTNLHKMFPFTMTKACDIYCANLK) are extracellular. Residues 226 to 246 (TCFFLSITLLLIVTFSSLWYV) traverse the membrane as a helical segment. Residues 247 to 281 (KDKQWSPPQGDKEEKTSSLFFFGEIFGAVRHMKRP) are Cytoplasmic-facing. The chain crosses the membrane as a helical span at residues 282 to 302 (MVMLLIVTVINWIAWFPFILY). Residues 303–333 (DTDWMGREVYGGNSDGDERSKKLYDQGVQAG) lie on the Extracellular side of the membrane. A helical transmembrane segment spans residues 334–354 (ALGLMFNSILLGFVSLGVESI). Residues 355–363 (GRKMGGAKR) lie on the Cytoplasmic side of the membrane. The helical transmembrane segment at 364 to 384 (LWGCVNFILAIGLAMTVLVTK) threads the bilayer. The Extracellular segment spans residues 385 to 406 (SAEHHREIAGPLAGPSSGIKAG). The helical transmembrane segment at 407 to 427 (VFSLFTVLGIPLAITYSIPFA) threads the bilayer. Residues 428 to 440 (LASIFSTNSGAGQ) lie on the Cytoplasmic side of the membrane. Residues 441–461 (GLSLGVLNIAICIPQMIVSFS) form a helical membrane-spanning segment. Topologically, residues 462–473 (SGPLDAQFGGGN) are extracellular. A helical transmembrane segment spans residues 474 to 494 (LPSFVVGAIAAAVSGVLALTV). Topologically, residues 495–512 (LPSPPPDAPAMSGAMGFH) are cytoplasmic.

It belongs to the glycoside-pentoside-hexuronide (GPH) cation symporter transporter (TC 2.A.2.4) family. Widely expressed. Expressed in the endosperm and on the epidermis of the outer surface of the cotyledons of torpedo-stage or older embryos.

It localises to the cell membrane. The catalysed reaction is sucrose(out) + H(+)(out) = sucrose(in) + H(+)(in). It participates in glycan biosynthesis; sucrose metabolism. With respect to regulation, inhibited by protonophores (e.g. carbonyl cyanide m-chlorophenyl-hydrazone (CCCP)) and SH group inhibitors (e.g. p-chloromercuribenzene sulphonic acid (PCMBS)). In terms of biological role, responsible in a heterologous system for the transport of sucrose into the cell, with the concomitant uptake of protons (symport system). Can also transport biotin, and probably maltose at a lesser rate. In planta, the role of SUC5 for the transport of sucrose seems to be negligible. Plays a role in the nutrition of the filial tissues during early seed development and is probably involved in the import of biotin into the endosperm and the embryo epidermis. The sequence is that of Sucrose transport protein SUC5 from Arabidopsis thaliana (Mouse-ear cress).